A 378-amino-acid chain; its full sequence is Stimulator of interferon genes protein (378 aa).

The Cytoplasmic segment spans residues 1–17; sequence MPYSNLHPAIPRPRGHR. A mediates interaction with ZDHHC1 and ZDHHC11 region spans residues 1-189; the sequence is MPYSNLHPAI…MFNQLHNNML (189 aa). Residues 18–34 form a helical membrane-spanning segment; that stretch reads SKYVALIFLVASLMILW. A Glycyl lysine isopeptide (Lys-Gly) (interchain with G-Cter in ubiquitin) cross-link involves residue Lys19. The Lumenal portion of the chain corresponds to 35–44; it reads VAKDPPNHTL. The helical transmembrane segment at 45 to 69 threads the bilayer; the sequence is KYLALHLASHELGLLLKNLCCLAEE. At 70-91 the chain is on the cytoplasmic side; it reads LCHVQSRYQGSYWKAVRACLGC. Residues Cys88 and Cys91 are each lipidated (S-palmitoyl cysteine). A helical transmembrane segment spans residues 92-106; the sequence is PIHCMAMILLSSYFY. Residues 107–115 lie on the Lumenal side of the membrane; the sequence is FLQNTADIY. The helical transmembrane segment at 116 to 133 threads the bilayer; sequence LSWMFGLLVLYKSLSMLL. At 134 to 378 the chain is on the cytoplasmic side; sequence GLQSLTPAEV…QPLPLRTDLI (245 aa). A Glycyl lysine isopeptide (Lys-Gly) (interchain with G-Cter in ubiquitin) cross-link involves residue Lys150. Positions 152-339 are cyclic dinucleotide-binding domain (CBD); sequence LNVAHGLAWS…RHIRQEEKEE (188 aa). Gly165 is a binding site for 3',3'-c-di-GMP. A 2',3'-cUAMP-binding site is contributed by Tyr166. Tyr166 lines the 3',3'-cGAMP pocket. Lys235 is covalently cross-linked (Glycyl lysine isopeptide (Lys-Gly) (interchain with G-Cter in ubiquitin)). A 2',3'-cUAMP-binding site is contributed by Arg237. Arg237 serves as a coordination point for 3',3'-cGAMP. Arg237 is a 2',3'-cGAMP binding site. Residues 237–240 and Thr262 contribute to the 3',3'-c-di-GMP site; that span reads RVYS. Residue Ser240 is modified to Phosphoserine. A 2',3'-cUAMP-binding site is contributed by Thr262. Thr262 is a 2',3'-cGAMP binding site. Residue Lys337 forms a Glycyl lysine isopeptide (Lys-Gly) (interchain with G-Cter in SUMO) linkage. The C-terminal tail (CTT) stretch occupies residues 339–378; that stretch reads EVTMNAPMTSVAPPPSVLSQEPRLLISGMDQPLPLRTDLI. The residue at position 354 (Ser354) is a Phosphoserine; by MAP3K7. 2 positions are modified to phosphoserine; by TBK1: Ser357 and Ser365. The short motif at 362 to 365 is the pLxIS motif element; the sequence is LLIS.

It belongs to the STING family. Homodimer; forms a homodimer in absence of cyclic nucleotide (c-di-GMP or cGAMP); 'Lys-63'-linked ubiquitination at Lys-150 is required for homodimerization. Homotetramer; in presence of cyclic nucleotide (c-di-GMP or cGAMP), forms tetramers and higher-order oligomers through side-by-side packing. Interacts (when phosphorylated) with IRF3; following activation and phosphorylation on the pLxIS motif by TBK1, recruits IRF3. Interacts with RIGI, MAVS and SSR2. Interacts with RNF5 and TRIM56. Interacts with TBK1; when homodimer, leading to subsequent production of IFN-beta. Interacts with IFIT1 and IFIT2. Interacts with TRIM29; this interaction induces STING1 ubiquitination and subsequent degradation. Associates with the MHC-II complex. Interacts with STEEP1; interaction takes place upon cGAMP-activation and STING1 phosphorylation by MAP3K7/TAK1 and promotes STING1 translocation to COPII vesicles. Interacts with SEC24A, SEC24B and SEC24C; promoting translocation to COPII vesicles. Interacts (when ubiquitinated) with SQSTM1; leading to relocalization to autophagosomes. Interacts with SURF4. Interacts with HNRNPA2B1. Interacts with ZDHHC1; ZDHHC1 constitutively interacts with STING1 and in presence of DNA viruses activates it by promoting its cGAMP-induced oligomerization and the recruitment of downstream signaling components. Interacts with ZDHHC11; in presence of DNA viruses promotes the recruitment of IRF3 to STING1. Interacts with TOMM70. Interacts with IFI204. Interacts with TAB1; promoting recruitment of TAB1 to the endoplasmic reticulum membrane and subsequent activation of MAP3K7/TAK1. Interacts (via transmembrane domain) with TMEM203. Interacts with DDX41. Post-translationally, phosphorylation by TBK1 leads to activation and production of IFN-beta. Following cyclic nucleotide (c-di-GMP or cGAMP)-binding, activation and translocation from the endoplasmic reticulum, STING1 is phosphorylated by TBK1 at Ser-365 in the pLxIS motif. The phosphorylated pLxIS motif constitutes an IRF3-binding motif, leading to recruitment of the transcription factor IRF3 to induce type-I interferons and other cytokines. The phosphorylated pLxIS motif facilitates SENP2 recruitment during late phase of viral infection. Phosphorylated on tyrosine residues upon MHC-II aggregation. Dephosphorylation by PPP6C leads to inactivation and decreased production of IFN-beta. Phosphorylation at Ser-357 is also required to activate IRF3. Phosphorylation at Ser-354 by MAP3K7/TAK1 facilitates its interaction with STEEP1, promoting STING1 translocation to COPII vesicles. Ubiquitinated. Ubiquitinated via 'Lys-63'-linked ubiquitin chains in response to double-stranded DNA treatment, leading to relocalization to autophagosomes and subsequent degradation; this process is dependent on SQSTM1. 'Lys-63'-linked ubiquitination mediated by TRIM56 at Lys-150 promotes homodimerization and recruitment of the antiviral kinase TBK1 and subsequent production of IFN-beta. 'Lys-48'-linked polyubiquitination at Lys-150 occurring after viral infection is mediated by RNF5 and leads to proteasomal degradation. 'Lys-11'-linked polyubiquitination at Lys-150 by RNF26 leads to stabilize STING1: it protects STING1 from RNF5-mediated 'Lys-48'-linked polyubiquitination. 'Lys-33'-linked and 'Lys-48'-linked deubiquitinated by USP20; leading to its stabilization and promotion of innate antiviral response. 'Lys-48'-linked deubiquitinated by USP44; leading to its stabilization and promotion of innate antiviral response. Deubiquitinated by USP13; leading to inhibition of innate antiviral response. 'Lys-63'-linked deubiquitinated by USP49; leading to inhibition of the subsequent recruitment of TBK1 to the signaling complex. 'Lys-63'-linked ubiquitination mediated by RNF39 promotes the activation of the cGAS-STING pathway. MARCHF5-mediated ubiquitination prevents the oxidation-induced polymer formation. In terms of processing, sumoylated at Lys-337 by TRIM38 during the early phase of viral infection, promoting its stability by preventing its relocalization to autophagosomes and subsequent degradation. Desumoylated by SENP2 during the late phase of viral infection. Post-translationally, palmitoylation takes place in the Golgi apparatus and creates a platform for the recruitment of TBK1. In terms of tissue distribution, present in spleen and thymus tissue. Also present in dendritic cells (at protein level).

It localises to the endoplasmic reticulum membrane. The protein localises to the cytoplasm. Its subcellular location is the perinuclear region. The protein resides in the endoplasmic reticulum-Golgi intermediate compartment membrane. It is found in the golgi apparatus membrane. It localises to the cytoplasmic vesicle. The protein localises to the autophagosome membrane. Its subcellular location is the mitochondrion outer membrane. The protein resides in the cell membrane. It is found in the lysosome membrane. The enzyme catalyses H(+)(in) = H(+)(out). Activated by anticancer drug 5,6-dimethylxanthenone 4-acetic acid (DMXAA). Specifically inhibited by nitrofuran derivatives C-178 and C-176, which covalently bind Cys-91 and prevent palmitoylation and subsequent activation od STING1. Its function is as follows. Facilitator of innate immune signaling that acts as a sensor of cytosolic DNA from bacteria and viruses and promotes the production of type I interferon (IFN-alpha and IFN-beta). Innate immune response is triggered in response to non-CpG double-stranded DNA from viruses and bacteria delivered to the cytoplasm. Acts by binding cyclic dinucleotides: recognizes and binds cyclic di-GMP (c-di-GMP), a second messenger produced by bacteria, cyclic UMP-AMP (2',3'-cUAMP), and cyclic GMP-AMP (cGAMP), a messenger produced by CGAS in response to DNA virus in the cytosol. Upon binding to c-di-GMP, cUAMP or cGAMP, STING1 oligomerizes, translocates from the endoplasmic reticulum and is phosphorylated by TBK1 on the pLxIS motif, leading to recruitment and subsequent activation of the transcription factor IRF3 to induce expression of type I interferon and exert a potent anti-viral state. Exhibits 2',3' phosphodiester linkage-specific ligand recognition: can bind both 2'-3' linked cGAMP (2'-3'-cGAMP) and 3'-3' linked cGAMP but is preferentially activated by 2'-3' linked cGAMP. The preference for 2'-3'-cGAMP, compared to other linkage isomers is probably due to the ligand itself, whichs adopts an organized free-ligand conformation that resembles the STING1-bound conformation and pays low energy costs in changing into the active conformation. In addition to promote the production of type I interferons, plays a direct role in autophagy. Following cGAMP-binding, STING1 buds from the endoplasmic reticulum into COPII vesicles, which then form the endoplasmic reticulum-Golgi intermediate compartment (ERGIC). The ERGIC serves as the membrane source for WIPI2 recruitment and LC3 lipidation, leading to formation of autophagosomes that target cytosolic DNA or DNA viruses for degradation by the lysosome. Promotes autophagy by acting as a proton channel that directs proton efflux from the Golgi to facilitate MAP1LC3B/LC3B lipidation. The autophagy- and interferon-inducing activities can be uncoupled and autophagy induction is independent of TBK1 phosphorylation. Autophagy is also triggered upon infection by bacteria: following c-di-GMP-binding, which is produced by live Gram-positive bacteria, promotes reticulophagy. May be involved in translocon function, the translocon possibly being able to influence the induction of type I interferons. May be involved in transduction of apoptotic signals via its association with the major histocompatibility complex class II (MHC-II). The sequence is that of Stimulator of interferon genes protein from Mus musculus (Mouse).